Here is an 85-residue protein sequence, read N- to C-terminus: uncharacterized protein (85 aa).

This is an uncharacterized protein from Caenorhabditis elegans.